A 321-amino-acid chain; its full sequence is o-succinylbenzoate synthase (321 aa).

Lys134 acts as the Proton donor in catalysis. Residues Asp162, Glu191, and Asp214 each contribute to the Mg(2+) site. Lys236 acts as the Proton acceptor in catalysis.

Belongs to the mandelate racemase/muconate lactonizing enzyme family. MenC type 1 subfamily. Requires a divalent metal cation as cofactor.

The catalysed reaction is (1R,6R)-6-hydroxy-2-succinyl-cyclohexa-2,4-diene-1-carboxylate = 2-succinylbenzoate + H2O. Its pathway is quinol/quinone metabolism; 1,4-dihydroxy-2-naphthoate biosynthesis; 1,4-dihydroxy-2-naphthoate from chorismate: step 4/7. It participates in quinol/quinone metabolism; menaquinone biosynthesis. In terms of biological role, converts 2-succinyl-6-hydroxy-2,4-cyclohexadiene-1-carboxylate (SHCHC) to 2-succinylbenzoate (OSB). The protein is o-succinylbenzoate synthase of Klebsiella pneumoniae (strain 342).